Consider the following 151-residue polypeptide: UPF0756 membrane protein GWCH70_2680 (151 aa).

4 consecutive transmembrane segments (helical) span residues 5-25 (ILFL…SLMI), 53-73 (WGVT…EIGF), 86-106 (WIAL…VTLL), and 116-136 (LVFG…GPLI).

This sequence belongs to the UPF0756 family.

Its subcellular location is the cell membrane. The chain is UPF0756 membrane protein GWCH70_2680 from Geobacillus sp. (strain WCH70).